The chain runs to 496 residues: Probable cytosol aminopeptidase (496 aa).

Mn(2+) is bound by residues K266 and D271. The active site involves K278. Mn(2+) is bound by residues D289, D348, and E350. The active site involves R352.

It belongs to the peptidase M17 family. Mn(2+) is required as a cofactor.

The protein localises to the cytoplasm. The catalysed reaction is Release of an N-terminal amino acid, Xaa-|-Yaa-, in which Xaa is preferably Leu, but may be other amino acids including Pro although not Arg or Lys, and Yaa may be Pro. Amino acid amides and methyl esters are also readily hydrolyzed, but rates on arylamides are exceedingly low.. The enzyme catalyses Release of an N-terminal amino acid, preferentially leucine, but not glutamic or aspartic acids.. In terms of biological role, presumably involved in the processing and regular turnover of intracellular proteins. Catalyzes the removal of unsubstituted N-terminal amino acids from various peptides. The polypeptide is Probable cytosol aminopeptidase (Pseudomonas fluorescens (strain SBW25)).